A 259-amino-acid polypeptide reads, in one-letter code: UPF0246 protein MADE_1015435 (259 aa).

The protein belongs to the UPF0246 family.

The protein is UPF0246 protein MADE_1015435 of Alteromonas mediterranea (strain DSM 17117 / CIP 110805 / LMG 28347 / Deep ecotype).